The sequence spans 457 residues: Argininosuccinate lyase (457 aa).

This sequence belongs to the lyase 1 family. Argininosuccinate lyase subfamily.

It localises to the cytoplasm. It catalyses the reaction 2-(N(omega)-L-arginino)succinate = fumarate + L-arginine. It participates in amino-acid biosynthesis; L-arginine biosynthesis; L-arginine from L-ornithine and carbamoyl phosphate: step 3/3. The polypeptide is Argininosuccinate lyase (Citrobacter koseri (strain ATCC BAA-895 / CDC 4225-83 / SGSC4696)).